The following is a 197-amino-acid chain: Phosphoheptose isomerase (197 aa).

The 163-residue stretch at methionine 34–glutamine 196 folds into the SIS domain. Residue asparagine 49–glycine 51 coordinates substrate. 2 residues coordinate Zn(2+): histidine 58 and glutamate 62. Residues glutamate 62, asparagine 91 to aspartate 92, serine 117 to serine 119, serine 122, and glutamine 172 each bind substrate. Zn(2+)-binding residues include glutamine 172 and histidine 180.

This sequence belongs to the SIS family. GmhA subfamily. Homotetramer. It depends on Zn(2+) as a cofactor.

It localises to the cytoplasm. The catalysed reaction is 2 D-sedoheptulose 7-phosphate = D-glycero-alpha-D-manno-heptose 7-phosphate + D-glycero-beta-D-manno-heptose 7-phosphate. It participates in carbohydrate biosynthesis; D-glycero-D-manno-heptose 7-phosphate biosynthesis; D-glycero-alpha-D-manno-heptose 7-phosphate and D-glycero-beta-D-manno-heptose 7-phosphate from sedoheptulose 7-phosphate: step 1/1. Catalyzes the isomerization of sedoheptulose 7-phosphate in D-glycero-D-manno-heptose 7-phosphate. The sequence is that of Phosphoheptose isomerase from Shewanella halifaxensis (strain HAW-EB4).